The following is a 287-amino-acid chain: Undecaprenyl-diphosphatase (287 aa).

7 helical membrane-spanning segments follow: residues 6–26, 45–65, 89–109, 111–131, 204–224, 238–258, and 266–286; these read LHLL…FIPV, SGKV…MWIF, NLLL…KSIK, VFYH…IMLW, ATEF…VYDL, AIAV…RAVL, and YRVF…WIYA.

The protein belongs to the UppP family.

It is found in the cell inner membrane. It carries out the reaction di-trans,octa-cis-undecaprenyl diphosphate + H2O = di-trans,octa-cis-undecaprenyl phosphate + phosphate + H(+). Catalyzes the dephosphorylation of undecaprenyl diphosphate (UPP). Confers resistance to bacitracin. The polypeptide is Undecaprenyl-diphosphatase (Bordetella bronchiseptica (strain ATCC BAA-588 / NCTC 13252 / RB50) (Alcaligenes bronchisepticus)).